Consider the following 114-residue polypeptide: Probable non-functional T cell receptor beta variable 6-7 (114 aa).

Residues 1–21 (MSLGLLCCVAFSLLWAGPMNA) form the signal peptide. One can recognise an Ig-like domain in the interval 22 to 114 (GVTQTPKFHV…TSVYFCASSY (93 aa)). A disulfide bridge links cysteine 42 with cysteine 110. A glycan (N-linked (GlcNAc...) asparagine) is linked at asparagine 84.

Alpha-beta TR is a heterodimer composed of an alpha and beta chain; disulfide-linked. The alpha-beta TR is associated with the transmembrane signaling CD3 coreceptor proteins to form the TR-CD3 (TcR or TCR). The assembly of alpha-beta TR heterodimers with CD3 occurs in the endoplasmic reticulum where a single alpha-beta TR heterodimer associates with one CD3D-CD3E heterodimer, one CD3G-CD3E heterodimer and one CD247 homodimer forming a stable octameric structure. CD3D-CD3E and CD3G-CD3E heterodimers preferentially associate with TR alpha and TR beta chains, respectively. The association of the CD247 homodimer is the last step of TcR assembly in the endoplasmic reticulum and is required for transport to the cell surface.

It is found in the cell membrane. Probable non-functional open reading frame (ORF) of V region of the variable domain of T cell receptor (TR) beta chain. Non-functional ORF generally cannot participate in the synthesis of a productive T cell receptor (TR) chain due to altered V-(D)-J or switch recombination and/or splicing site (at mRNA level) and/or conserved amino acid change (protein level). Alpha-beta T cell receptors are antigen specific receptors which are essential to the immune response and are present on the cell surface of T lymphocytes. Recognize peptide-major histocompatibility (MH) (pMH) complexes that are displayed by antigen presenting cells (APC), a prerequisite for efficient T cell adaptive immunity against pathogens. Binding of alpha-beta TR to pMH complex initiates TR-CD3 clustering on the cell surface and intracellular activation of LCK that phosphorylates the ITAM motifs of CD3G, CD3D, CD3E and CD247 enabling the recruitment of ZAP70. In turn ZAP70 phosphorylates LAT, which recruits numerous signaling molecules to form the LAT signalosome. The LAT signalosome propagates signal branching to three major signaling pathways, the calcium, the mitogen-activated protein kinase (MAPK) kinase and the nuclear factor NF-kappa-B (NF-kB) pathways, leading to the mobilization of transcription factors that are critical for gene expression and essential for T cell growth and differentiation. The T cell repertoire is generated in the thymus, by V-(D)-J rearrangement. This repertoire is then shaped by intrathymic selection events to generate a peripheral T cell pool of self-MH restricted, non-autoaggressive T cells. Post-thymic interaction of alpha-beta TR with the pMH complexes shapes TR structural and functional avidity. This chain is Probable non-functional T cell receptor beta variable 6-7, found in Homo sapiens (Human).